The primary structure comprises 338 residues: Anthranilate phosphoribosyltransferase (338 aa).

Residues Gly81, 84-85 (GD), Thr89, 91-94 (NIST), 109-117 (KHGNRAQSS), and Thr121 contribute to the 5-phospho-alpha-D-ribose 1-diphosphate site. Gly81 is an anthranilate binding site. Ser93 is a Mg(2+) binding site. Asn112 provides a ligand contact to anthranilate. Arg167 contacts anthranilate. The Mg(2+) site is built by Asp225 and Glu226.

This sequence belongs to the anthranilate phosphoribosyltransferase family. In terms of assembly, homodimer. Mg(2+) serves as cofactor.

The catalysed reaction is N-(5-phospho-beta-D-ribosyl)anthranilate + diphosphate = 5-phospho-alpha-D-ribose 1-diphosphate + anthranilate. The protein operates within amino-acid biosynthesis; L-tryptophan biosynthesis; L-tryptophan from chorismate: step 2/5. In terms of biological role, catalyzes the transfer of the phosphoribosyl group of 5-phosphorylribose-1-pyrophosphate (PRPP) to anthranilate to yield N-(5'-phosphoribosyl)-anthranilate (PRA). The protein is Anthranilate phosphoribosyltransferase of Rhizobium rhizogenes (strain K84 / ATCC BAA-868) (Agrobacterium radiobacter).